A 161-amino-acid polypeptide reads, in one-letter code: S-ribosylhomocysteine lyase (161 aa).

3 residues coordinate Fe cation: His57, His61, and Cys127.

Belongs to the LuxS family. Homodimer. The cofactor is Fe cation.

The catalysed reaction is S-(5-deoxy-D-ribos-5-yl)-L-homocysteine = (S)-4,5-dihydroxypentane-2,3-dione + L-homocysteine. Functionally, involved in the synthesis of autoinducer 2 (AI-2) which is secreted by bacteria and is used to communicate both the cell density and the metabolic potential of the environment. The regulation of gene expression in response to changes in cell density is called quorum sensing. Catalyzes the transformation of S-ribosylhomocysteine (RHC) to homocysteine (HC) and 4,5-dihydroxy-2,3-pentadione (DPD). This is S-ribosylhomocysteine lyase from Streptococcus equi subsp. zooepidemicus (strain H70).